Here is a 330-residue protein sequence, read N- to C-terminus: Phosphate acyltransferase (330 aa).

It belongs to the PlsX family. Homodimer. Probably interacts with PlsY.

The protein resides in the cytoplasm. The enzyme catalyses a fatty acyl-[ACP] + phosphate = an acyl phosphate + holo-[ACP]. It participates in lipid metabolism; phospholipid metabolism. Functionally, catalyzes the reversible formation of acyl-phosphate (acyl-PO(4)) from acyl-[acyl-carrier-protein] (acyl-ACP). This enzyme utilizes acyl-ACP as fatty acyl donor, but not acyl-CoA. The sequence is that of Phosphate acyltransferase from Bacillus thuringiensis (strain Al Hakam).